A 521-amino-acid chain; its full sequence is Tigger transposable element-derived protein 6 (521 aa).

An HTH psq-type domain is found at Asn-3–Phe-54. 2 consecutive DNA-binding regions (H-T-H motif) follow at residues Lys-30 to Asp-50 and Ser-99 to Arg-130. In terms of domain architecture, HTH CENPB-type spans Gln-66 to Ala-137. The DDE-1 domain maps to Tyr-170–Trp-372.

The protein belongs to the tigger transposable element derived protein family.

It is found in the nucleus. The polypeptide is Tigger transposable element-derived protein 6 (TIGD6) (Homo sapiens (Human)).